An 864-amino-acid polypeptide reads, in one-letter code: Disintegrin and metalloproteinase domain-containing protein 15 (864 aa).

Positions 1-17 (MRLALLWALGLLGAGSP) are cleaved as a signal peptide. The segment at 18–45 (RPSPPLPNIGGTEEEQQASPERTLSGSM) is disordered. Positions 18-207 (RPSPPLPNIG…EQHHAHRLKR (190 aa)) are excised as a propeptide. The span at 34–45 (QASPERTLSGSM) shows a compositional bias: polar residues. Positions 177-184 (HTCAPSWH) match the Cysteine switch motif. Cys179 contributes to the Zn(2+) binding site. The Extracellular portion of the chain corresponds to 208–696 (DVVTETKIVE…TQLKATSSLT (489 aa)). The Peptidase M12B domain maps to 214–415 (KIVELVIVAD…GMGSCLFERQ (202 aa)). A glycan (N-linked (GlcNAc...) asparagine) is linked at Asn238. 4 disulfides stabilise this stretch: Cys324/Cys410, Cys366/Cys394, Cys368/Cys377, and Cys481/Cys501. His349 is a Zn(2+) binding site. Glu350 is an active-site residue. Residues His353 and His359 each contribute to the Zn(2+) site. N-linked (GlcNAc...) asparagine glycans are attached at residues Asn390 and Asn393. The Disintegrin domain occupies 422–509 (SSLCGNMFVD…QCPSDIRLGD (88 aa)). N-linked (GlcNAc...) asparagine glycans are attached at residues Asn607 and Asn612. Cystine bridges form between Cys658/Cys668, Cys662/Cys674, and Cys676/Cys685. One can recognise an EGF-like domain in the interval 658-686 (CRRKCHGHGVCDSSGHCRCEEGWAPPDCM). Residues 697–717 (TGLLLSLLLLLVLVLLGASYW) traverse the membrane as a helical segment. Phosphotyrosine; by HCK and LCK is present on residues Tyr716 and Tyr736. Residues 718–864 (HRARLHQRLC…PPPAASSLYL (147 aa)) lie on the Cytoplasmic side of the membrane. Residues 736-864 (YRAPQSCPPE…PPPAASSLYL (129 aa)) form a disordered region. A compositionally biased stretch (pro residues) spans 741-750 (SCPPERPGPP). Residues 752–762 (RAQQMTGTKQA) show a composition bias toward polar residues. Composition is skewed to pro residues over residues 768–780 (PVPP…PNPV) and 814–825 (TKPPPPRKPLPA). Short sequence motifs (SH3-binding) lie at residues 816 to 822 (PPPPRKP) and 851 to 857 (RPAPPPP).

Interacts specifically with Src family protein-tyrosine kinases (PTKs). Interacts with ITAGV-ITGB3 (vitronectin receptor). Interacts with SH3GL2 and SNX9; this interaction occurs preferentially with ADAM15 precursor, rather than the processed form, suggesting it occurs in a secretory pathway compartment prior to the medial Golgi. Interacts with ITAG9-ITGB1. Interacts with SH3PXD2A. Interacts with ITAGV-ITGB1. Interacts with GRB2, HCK, ITSN1, ITSN2, LYN, MAPK1, MAPK3, NCF1, NCK1, nephrocystin, PTK6, SNX33, LCK and SRC. The cofactor is Zn(2+). The precursor is cleaved by a furin endopeptidase. An additional membrane proximal site of cleavage affects a small percentage of the proteins and results in disulfide-linked fragments. The prodomain is apparently cleaved in several positions that are N-terminal of the furin cleavage site. In terms of processing, may be partially sialylated. Post-translationally, phosphorylation increases association with PTKs. Expressed moderately in pericytes of retina. Expressed in testis and in spermatozoa from the caput, corpus, and cauda epididymis, as well as in non-capacitated and acrosome-reacted sperm (at protein level). Highly expressed in heart, brain, lung, and kidney. Expressed at lower levels in spleen, liver, testis and muscle.

The protein localises to the endomembrane system. It localises to the cell junction. The protein resides in the adherens junction. Its subcellular location is the cell projection. It is found in the cilium. The protein localises to the flagellum. It localises to the cytoplasmic vesicle. The protein resides in the secretory vesicle. Its subcellular location is the acrosome. Its function is as follows. Active metalloproteinase with gelatinolytic and collagenolytic activity. Plays a role in the wound healing process. Mediates both heterotypic intraepithelial cell/T-cell interactions and homotypic T-cell aggregation. Inhibits beta-1 integrin-mediated cell adhesion and migration of airway smooth muscle cells. Suppresses cell motility on or towards fibronectin possibly by driving alpha-v/beta-1 integrin (ITAGV-ITGB1) cell surface expression via ERK1/2 inactivation. Cleaves E-cadherin in response to growth factor deprivation. Plays a role in glomerular cell migration. Plays a role in pathological neovascularization. May play a role in cartilage remodeling. May be proteolytically processed, during sperm epididymal maturation and the acrosome reaction. May play a role in sperm-egg binding through its disintegrin domain. Interactions with egg membrane could be mediated via binding between the disintegrin-like domain to one or more integrin receptors on the egg. The sequence is that of Disintegrin and metalloproteinase domain-containing protein 15 (Adam15) from Mus musculus (Mouse).